Here is a 441-residue protein sequence, read N- to C-terminus: tRNA modification GTPase MnmE (441 aa).

(6S)-5-formyl-5,6,7,8-tetrahydrofolate is bound by residues Arg-21, Glu-79, and Lys-118. The TrmE-type G domain occupies 214-367; that stretch reads GIHITILGAP…LVAELARVVE (154 aa). Residues 224–229, 243–249, and 268–271 contribute to the GTP site; these read NAGKSS, SAQAGTT, and DTAG. Mg(2+) contacts are provided by Ser-228 and Thr-249. Residue Lys-441 coordinates (6S)-5-formyl-5,6,7,8-tetrahydrofolate.

Belongs to the TRAFAC class TrmE-Era-EngA-EngB-Septin-like GTPase superfamily. TrmE GTPase family. Homodimer. Heterotetramer of two MnmE and two MnmG subunits. It depends on K(+) as a cofactor.

Its subcellular location is the cytoplasm. Functionally, exhibits a very high intrinsic GTPase hydrolysis rate. Involved in the addition of a carboxymethylaminomethyl (cmnm) group at the wobble position (U34) of certain tRNAs, forming tRNA-cmnm(5)s(2)U34. This Paramagnetospirillum magneticum (strain ATCC 700264 / AMB-1) (Magnetospirillum magneticum) protein is tRNA modification GTPase MnmE.